Consider the following 127-residue polypeptide: Phosphoribosyl-AMP cyclohydrolase (127 aa).

Aspartate 83 contributes to the Mg(2+) binding site. Cysteine 84 serves as a coordination point for Zn(2+). Positions 85 and 87 each coordinate Mg(2+). Cysteine 100 and cysteine 107 together coordinate Zn(2+).

This sequence belongs to the PRA-CH family. As to quaternary structure, homodimer. The cofactor is Mg(2+). Requires Zn(2+) as cofactor.

It localises to the cytoplasm. It carries out the reaction 1-(5-phospho-beta-D-ribosyl)-5'-AMP + H2O = 1-(5-phospho-beta-D-ribosyl)-5-[(5-phospho-beta-D-ribosylamino)methylideneamino]imidazole-4-carboxamide. It functions in the pathway amino-acid biosynthesis; L-histidine biosynthesis; L-histidine from 5-phospho-alpha-D-ribose 1-diphosphate: step 3/9. Functionally, catalyzes the hydrolysis of the adenine ring of phosphoribosyl-AMP. In Methanocaldococcus jannaschii (strain ATCC 43067 / DSM 2661 / JAL-1 / JCM 10045 / NBRC 100440) (Methanococcus jannaschii), this protein is Phosphoribosyl-AMP cyclohydrolase.